The primary structure comprises 375 residues: Alcohol dehydrogenase 1 (375 aa).

S2 carries the N-acetylserine modification. Positions 47, 68, 98, 101, 104, 112, and 175 each coordinate Zn(2+). NAD(+) is bound by residues 200-205 (WSGRVG), D224, and K229. K234 is modified (N6-succinyllysine). Residue 293–295 (VGV) coordinates NAD(+). Residue K340 is modified to N6-succinyllysine. R370 contributes to the NAD(+) binding site.

Belongs to the zinc-containing alcohol dehydrogenase family. Class-I subfamily. Homodimer. It depends on Zn(2+) as a cofactor.

The protein localises to the cytoplasm. The enzyme catalyses a primary alcohol + NAD(+) = an aldehyde + NADH + H(+). It catalyses the reaction a secondary alcohol + NAD(+) = a ketone + NADH + H(+). The protein is Alcohol dehydrogenase 1 (ADH1) of Geomys attwateri (Attwater's pocket gopher).